We begin with the raw amino-acid sequence, 1811 residues long: ADP-ribosylation factor guanine nucleotide-exchange factor sec71 (1811 aa).

2 disordered regions span residues 1 to 108 (MTDL…TSEA) and 316 to 336 (INMNKSSSNGTPDRANSPIPS). 3 stretches are compositionally biased toward basic and acidic residues: residues 33–49 (STIKSRVSDEIDEHDSI), 57–73 (KSIEINDKNLEAEKDIE), and 80–91 (PPEDDLDSRSIE). A Phosphoserine modification is found at Ser40. 2 stretches are compositionally biased toward polar residues: residues 92-108 (SEQTGTLSKQTTSTSEA) and 316-326 (INMNKSSSNGT). Position 326 is a phosphothreonine (Thr326). A phosphoserine mark is found at Ser332 and Ser353. Residues 533-537 (NYDCI) carry the HUS box motif. Residues 643-663 (TAKDDETESTSKGEEPQKSKS) are compositionally biased toward basic and acidic residues. Residues 643–688 (TAKDDETESTSKGEEPQKSKSEPPSAGINSTSMDNLESSGQALATD) form a disordered region. Positions 669 to 688 (GINSTSMDNLESSGQALATD) are enriched in polar residues. The 189-residue stretch at 692 to 880 (QFENLKHRKK…TEVYEEIQKN (189 aa)) folds into the SEC7 domain. The residue at position 741 (Ser741) is a Phosphoserine. The residue at position 742 (Thr742) is a Phosphothreonine. A Mg(2+)-binding site is contributed by Asp812. The HDS1 domain stretch occupies residues 889-1103 (DPTSNFPEIP…TTKPLRKSLD (215 aa)).

It localises to the cytoplasm. It is found in the golgi apparatus. Its subcellular location is the trans-Golgi network. The protein localises to the cytoplasmic vesicle. The protein resides in the COPI-coated vesicle membrane. It localises to the COPII-coated vesicle membrane. In terms of biological role, guanine exchange factor that acts as an activator of arf1 at the trans-Golgi net-work and is thus involved in vesicular budding and traffic between compartments of the Golgi apparatus. Activation of Arf (ADP-ribosylation factor) GTPases is essential for vesicle formation via recruitment of cargo adapters and coat proteins necessary for Golgi trafficking. Involved in tunicamycin-induced ER stress response and subsequent apoptosis. The protein is ADP-ribosylation factor guanine nucleotide-exchange factor sec71 of Schizosaccharomyces pombe (strain 972 / ATCC 24843) (Fission yeast).